Here is a 369-residue protein sequence, read N- to C-terminus: Glycolate oxidase 1 (369 aa).

The region spanning 1–360 (MGEITNVMEY…TRAHIYTDAD (360 aa)) is the FMN hydroxy acid dehydrogenase domain. A glyoxylate-binding site is contributed by Tyr25. Residues 78-80 (PSA), Ser107, 128-130 (QLY), and Thr156 contribute to the FMN site. Position 130 (Tyr130) interacts with glyoxylate. Arg165 is a binding site for glyoxylate. FMN contacts are provided by Lys231 and Ser253. Positions 255 and 258 each coordinate glyoxylate. Catalysis depends on His255, which acts as the Proton acceptor. Residues 286-290 (DGGVR) and 309-310 (GR) each bind FMN. The Microbody targeting signal signature appears at 367–369 (PRL).

The protein belongs to the FMN-dependent alpha-hydroxy acid dehydrogenase family. As to quaternary structure, homotetramer. Interacts with rice dwarf virus (RDV) P8. This interaction promotes viral P8 relocation to virus factories peripheral to peroxisomes. FMN is required as a cofactor.

It is found in the peroxisome. The enzyme catalyses glycolate + O2 = glyoxylate + H2O2. It functions in the pathway photosynthesis; photorespiration; glycine from 2-phosphoglycolate: step 2/3. Functionally, catalyzes the oxidation of glycolate to glyoxylate, with a reduction of O2 to H2O2. Is a key enzyme in photorespiration in plants. Can exert a strong regulation over photosynthesis, possibly through a feed-back inhibition on Rubisco activase. Does not seem to play a role in oxalate accumulation. The protein is Glycolate oxidase 1 (GLO1) of Oryza sativa subsp. indica (Rice).